The chain runs to 31 residues: Photosystem I reaction center subunit XII (31 aa).

Residues 7–26 (QIFIALLTALIPAFFALKLG) traverse the membrane as a helical segment.

This sequence belongs to the PsaM family.

It is found in the plastid. Its subcellular location is the chloroplast thylakoid membrane. The chain is Photosystem I reaction center subunit XII from Euglena granulata.